The chain runs to 68 residues: Ribosome modulation factor (68 aa).

Belongs to the ribosome modulation factor family.

The protein localises to the cytoplasm. Functionally, during stationary phase, converts 70S ribosomes to an inactive dimeric form (100S ribosomes). The polypeptide is Ribosome modulation factor (Saccharophagus degradans (strain 2-40 / ATCC 43961 / DSM 17024)).